The chain runs to 273 residues: DNA repair protein RecO (273 aa).

This sequence belongs to the RecO family.

Its function is as follows. Involved in DNA repair and RecF pathway recombination. The chain is DNA repair protein RecO from Saccharopolyspora erythraea (strain ATCC 11635 / DSM 40517 / JCM 4748 / NBRC 13426 / NCIMB 8594 / NRRL 2338).